The chain runs to 317 residues: Ceramide reductase (317 aa).

The signal sequence occupies residues 1 to 27 (MATDARGVVAITGATGFLGRHLVRALA).

This sequence belongs to the NAD(P)-dependent epimerase/dehydratase family.

The protein resides in the periplasm. It catalyses the reaction N-acyl-3-oxosphinganine + NADH + H(+) = an N-acylsphinganine + NAD(+). It functions in the pathway lipid metabolism; sphingolipid metabolism. Involved in de novo bacterial ceramide synthesis. Catalyzes the reduction of bacterial oxidized ceramides to bacterial dihydroceramides. This chain is Ceramide reductase, found in Caulobacter vibrioides (strain NA1000 / CB15N) (Caulobacter crescentus).